A 486-amino-acid chain; its full sequence is 2-isopropylmalate synthase (486 aa).

The 263-residue stretch at 4–266 folds into the Pyruvate carboxyltransferase domain; sequence VYIFDTTLRD…KTDVNLKEIA (263 aa). Mn(2+) contacts are provided by Asp-13, His-201, His-203, and Asn-237. A regulatory domain region spans residues 390-486; the sequence is KVEIIHVTSG…LSTDIIEASA (97 aa).

Belongs to the alpha-IPM synthase/homocitrate synthase family. LeuA type 1 subfamily. Mn(2+) serves as cofactor.

It is found in the cytoplasm. The enzyme catalyses 3-methyl-2-oxobutanoate + acetyl-CoA + H2O = (2S)-2-isopropylmalate + CoA + H(+). Its pathway is amino-acid biosynthesis; L-leucine biosynthesis; L-leucine from 3-methyl-2-oxobutanoate: step 1/4. Catalyzes the condensation of the acetyl group of acetyl-CoA with 3-methyl-2-oxobutanoate (2-ketoisovalerate) to form 3-carboxy-3-hydroxy-4-methylpentanoate (2-isopropylmalate). This chain is 2-isopropylmalate synthase, found in Pyrococcus abyssi (strain GE5 / Orsay).